A 608-amino-acid chain; its full sequence is Tyrosyl-DNA phosphodiesterase 1 (608 aa).

The interval 1 to 101 is disordered; the sequence is MSQEGDYGRW…SDDELQPEMP (101 aa). A Phosphoserine modification is found at serine 61. The residue at position 147 (threonine 147) is a Phosphothreonine. Phosphoserine is present on serine 148. Histidine 263 (nucleophile) is an active-site residue. Lysine 265 contacts substrate. The segment at 400–403 is interaction with DNA; sequence SVGS. Histidine 493 serves as the catalytic Proton donor/acceptor. Residue lysine 495 coordinates substrate.

This sequence belongs to the tyrosyl-DNA phosphodiesterase family. In terms of assembly, monomer. In terms of processing, phosphorylated on serine and/or threonine residues, but not on tyrosine residues. As to expression, ubiquitously expressed. Similar expression throughout the central nervous system (whole brain, amygdala, caudate nucleus, cerebellum, cerebral cortex, frontal lobe, hippocampus, medulla oblongata, occipital lobe, putamen, substantia nigra, temporal lobe, thalamus, nucleus accumbens and spinal cord) and increased expression in testis and thymus.

It localises to the nucleus. The protein resides in the cytoplasm. Functionally, DNA repair enzyme that can remove a variety of covalent adducts from DNA through hydrolysis of a 3'-phosphodiester bond, giving rise to DNA with a free 3' phosphate. Catalyzes the hydrolysis of dead-end complexes between DNA and the topoisomerase I active site tyrosine residue. Hydrolyzes 3'-phosphoglycolates on protruding 3' ends on DNA double-strand breaks due to DNA damage by radiation and free radicals. Acts on blunt-ended double-strand DNA breaks and on single-stranded DNA. Has low 3'exonuclease activity and can remove a single nucleoside from the 3'end of DNA and RNA molecules with 3'hydroxyl groups. Has no exonuclease activity towards DNA or RNA with a 3'phosphate. The chain is Tyrosyl-DNA phosphodiesterase 1 (TDP1) from Homo sapiens (Human).